A 197-amino-acid chain; its full sequence is Phosphoheptose isomerase (197 aa).

Positions 34-196 (MVHCLLGGNK…DRTLFPQDEQ (163 aa)) constitute an SIS domain. Position 49–51 (49–51 (NGG)) interacts with substrate. Zn(2+)-binding residues include His-58 and Glu-62. Residues Glu-62, 91-92 (ND), 117-119 (STS), Ser-122, and Gln-172 each bind substrate. Residues Gln-172 and His-180 each contribute to the Zn(2+) site.

The protein belongs to the SIS family. GmhA subfamily. In terms of assembly, homotetramer. Zn(2+) is required as a cofactor.

Its subcellular location is the cytoplasm. It carries out the reaction 2 D-sedoheptulose 7-phosphate = D-glycero-alpha-D-manno-heptose 7-phosphate + D-glycero-beta-D-manno-heptose 7-phosphate. It participates in carbohydrate biosynthesis; D-glycero-D-manno-heptose 7-phosphate biosynthesis; D-glycero-alpha-D-manno-heptose 7-phosphate and D-glycero-beta-D-manno-heptose 7-phosphate from sedoheptulose 7-phosphate: step 1/1. Functionally, catalyzes the isomerization of sedoheptulose 7-phosphate in D-glycero-D-manno-heptose 7-phosphate. In Shewanella sediminis (strain HAW-EB3), this protein is Phosphoheptose isomerase.